A 317-amino-acid chain; its full sequence is Aspartate carbamoyltransferase catalytic subunit (317 aa).

Arg-55 and Thr-56 together coordinate carbamoyl phosphate. Position 83 (Lys-83) interacts with L-aspartate. Carbamoyl phosphate is bound by residues Arg-105, His-138, and Gln-141. The L-aspartate site is built by Arg-171 and Arg-225. Residues Gly-266 and Pro-267 each coordinate carbamoyl phosphate.

This sequence belongs to the aspartate/ornithine carbamoyltransferase superfamily. ATCase family. In terms of assembly, heterododecamer (2C3:3R2) of six catalytic PyrB chains organized as two trimers (C3), and six regulatory PyrI chains organized as three dimers (R2).

It carries out the reaction carbamoyl phosphate + L-aspartate = N-carbamoyl-L-aspartate + phosphate + H(+). It functions in the pathway pyrimidine metabolism; UMP biosynthesis via de novo pathway; (S)-dihydroorotate from bicarbonate: step 2/3. Functionally, catalyzes the condensation of carbamoyl phosphate and aspartate to form carbamoyl aspartate and inorganic phosphate, the committed step in the de novo pyrimidine nucleotide biosynthesis pathway. The polypeptide is Aspartate carbamoyltransferase catalytic subunit (Mycobacteroides abscessus (strain ATCC 19977 / DSM 44196 / CCUG 20993 / CIP 104536 / JCM 13569 / NCTC 13031 / TMC 1543 / L948) (Mycobacterium abscessus)).